Here is a 525-residue protein sequence, read N- to C-terminus: GMP synthase [glutamine-hydrolyzing] (525 aa).

The Glutamine amidotransferase type-1 domain occupies 9-207 (RILILDFGSQ…VLDICQCEKL (199 aa)). Cys-86 acts as the Nucleophile in catalysis. Active-site residues include His-181 and Glu-183. The region spanning 208–400 (WTPDAIIEDA…LGLPYDMLYR (193 aa)) is the GMPS ATP-PPase domain. 235–241 (SGGVDSS) contributes to the ATP binding site.

Homodimer.

The enzyme catalyses XMP + L-glutamine + ATP + H2O = GMP + L-glutamate + AMP + diphosphate + 2 H(+). Its pathway is purine metabolism; GMP biosynthesis; GMP from XMP (L-Gln route): step 1/1. Its function is as follows. Catalyzes the synthesis of GMP from XMP. This is GMP synthase [glutamine-hydrolyzing] from Pseudoalteromonas atlantica (strain T6c / ATCC BAA-1087).